A 133-amino-acid polypeptide reads, in one-letter code: Thioredoxin-like protein CXXS1 (133 aa).

The Thioredoxin domain occupies 1–120 (MEIQQQKGVG…VKKMVDASAE (120 aa)).

Belongs to the thioredoxin family.

This chain is Thioredoxin-like protein CXXS1, found in Oryza sativa subsp. japonica (Rice).